We begin with the raw amino-acid sequence, 617 residues long: RNA polymerase sigma factor RpoD (617 aa).

The tract at residues Pro-170–Glu-220 is disordered. The span at Asn-184–Lys-195 shows a compositional bias: basic and acidic residues. Acidic residues predominate over residues Asp-196–Pro-218. The segment at Met-383–Thr-453 is sigma-70 factor domain-2. The short motif at Asp-407–Gln-410 is the Interaction with polymerase core subunit RpoC element. Residues Glu-462–Met-538 are sigma-70 factor domain-3. The sigma-70 factor domain-4 stretch occupies residues Val-551 to His-604. Positions Leu-577 to Ala-596 form a DNA-binding region, H-T-H motif.

This sequence belongs to the sigma-70 factor family. RpoD/SigA subfamily. As to quaternary structure, interacts transiently with the RNA polymerase catalytic core.

The protein localises to the cytoplasm. In terms of biological role, sigma factors are initiation factors that promote the attachment of RNA polymerase to specific initiation sites and are then released. This sigma factor is the primary sigma factor during exponential growth. This Pseudomonas aeruginosa (strain ATCC 15692 / DSM 22644 / CIP 104116 / JCM 14847 / LMG 12228 / 1C / PRS 101 / PAO1) protein is RNA polymerase sigma factor RpoD.